A 374-amino-acid polypeptide reads, in one-letter code: Beta sliding clamp (374 aa).

Belongs to the beta sliding clamp family. As to quaternary structure, forms a ring-shaped head-to-tail homodimer around DNA which binds and tethers DNA polymerases and other proteins to the DNA. The DNA replisome complex has a single clamp-loading complex (3 tau and 1 each of delta, delta', psi and chi subunits) which binds 3 Pol III cores (1 core on the leading strand and 2 on the lagging strand) each with a beta sliding clamp dimer. Additional proteins in the replisome are other copies of gamma, psi and chi, Ssb, DNA helicase and RNA primase.

The protein resides in the cytoplasm. In terms of biological role, confers DNA tethering and processivity to DNA polymerases and other proteins. Acts as a clamp, forming a ring around DNA (a reaction catalyzed by the clamp-loading complex) which diffuses in an ATP-independent manner freely and bidirectionally along dsDNA. Initially characterized for its ability to contact the catalytic subunit of DNA polymerase III (Pol III), a complex, multichain enzyme responsible for most of the replicative synthesis in bacteria; Pol III exhibits 3'-5' exonuclease proofreading activity. The beta chain is required for initiation of replication as well as for processivity of DNA replication. This is Beta sliding clamp (dnaN) from Helicobacter pylori (strain ATCC 700392 / 26695) (Campylobacter pylori).